The sequence spans 401 residues: Argininosuccinate synthase (401 aa).

Position 8-16 (8-16 (AYSGGLDTS)) interacts with ATP. Tyr87 serves as a coordination point for L-citrulline. Gly117 is a binding site for ATP. The L-aspartate site is built by Thr119, Asn123, and Asp124. L-citrulline is bound at residue Asn123. 4 residues coordinate L-citrulline: Arg127, Ser175, Glu259, and Tyr271.

Belongs to the argininosuccinate synthase family. Type 1 subfamily. As to quaternary structure, homotetramer.

Its subcellular location is the cytoplasm. It carries out the reaction L-citrulline + L-aspartate + ATP = 2-(N(omega)-L-arginino)succinate + AMP + diphosphate + H(+). The protein operates within amino-acid biosynthesis; L-arginine biosynthesis; L-arginine from L-ornithine and carbamoyl phosphate: step 2/3. The chain is Argininosuccinate synthase from Paenarthrobacter aurescens (strain TC1).